Consider the following 206-residue polypeptide: Transmembrane emp24 domain-containing protein bai (206 aa).

The signal sequence occupies residues 1–20; sequence MLKSLLCILLIFGCLCRIHG. Topologically, residues 21 to 172 are lumenal; it reads VMFHLTPNTQ…RDTNEKTNSR (152 aa). One can recognise a GOLD domain in the interval 30 to 140; that stretch reads QKCLKEDIQA…LKPLEVDLKR (111 aa). A helical membrane pass occupies residues 173–193; that stretch reads VLFFSIFSMCCLLGLATWQVL. The Cytoplasmic portion of the chain corresponds to 194 to 206; it reads YLRRYFKAKKLIE.

Belongs to the EMP24/GP25L family.

Its subcellular location is the membrane. Functionally, eca and bai are essential, though not redundant, for dorsoventral patterning of the embryo. Specifically required during early embryogenesis for the activity of maternal tkv, while the zygotic tkv is not affected. In Drosophila grimshawi (Hawaiian fruit fly), this protein is Transmembrane emp24 domain-containing protein bai.